The primary structure comprises 263 residues: Probable cyclic nucleotide phosphodiesterase CPS_4178 (263 aa).

Residues Asp-21, His-23, Asp-62, Asn-94, His-160, His-198, and His-200 each coordinate Fe cation. AMP is bound by residues His-23, Asp-62, and 94-95 (NH). His-200 lines the AMP pocket.

The protein belongs to the cyclic nucleotide phosphodiesterase class-III family. Fe(2+) is required as a cofactor.

In Colwellia psychrerythraea (strain 34H / ATCC BAA-681) (Vibrio psychroerythus), this protein is Probable cyclic nucleotide phosphodiesterase CPS_4178.